Here is a 242-residue protein sequence, read N- to C-terminus: Galectin-3 (242 aa).

The interval 1–35 (MADGFSLNDALSGSGHPPNQGWPGPWGNQPAGPGG) is disordered. The residue at position 2 (Ala2) is an N-acetylalanine. Residue Ser6 is modified to Phosphoserine; by CK1. Ser12 is subject to Phosphoserine. Residues 17 to 31 (PPNQGWPGPWGNQPA) are compositionally biased toward low complexity. A run of 4 repeats spans residues 35–43 (GYPGAAYPG), 44–52 (AYPGHAPGA), 53–61 (YPGQAPPGP), and 62–70 (YPGPGAHGA). The segment at 35–98 (GYPGAAYPGA…GAGAYPGASP (64 aa)) is 7 X 9 AA tandem repeats of Y-P-G-X(3)-P-[GS]-A. The tract at residues 55 to 93 (GQAPPGPYPGPGAHGAYPGQPGGPGAYPSPGQPSGAGAY) is disordered. One copy of the 5; approximate repeat lies at 71-80 (YPGQPGGPGA). Residues 80 to 93 (AYPSPGQPSGAGAY) are compositionally biased toward low complexity. A 6; approximate repeat occupies 81–92 (YPSPGQPSGAGA). Residues 93–98 (YPGASP) form a 7; truncated repeat. A Galectin domain is found at 110–240 (YDLPLPGGVM…DIQLTSASHA (131 aa)). 173 to 181 (WGREERQTT) serves as a coordination point for a beta-D-galactoside. Residues 218–233 (RNLKEINKLGISGDIQ) carry the Nuclear export signal motif.

Probably forms homo- or heterodimers. Interacts with DMBT1. Interacts with CD6 and ALCAM. Forms a complex with the ITGA3, ITGB1 and CSPG4. Interacts with LGALS3BP, LYPD3, ZFTRAF1 and UACA. Interacts with TRIM16; this interaction mediates autophagy of damage endomembranes. Interacts with cargo receptor TMED10; the interaction mediates the translocation from the cytoplasm into the ERGIC (endoplasmic reticulum-Golgi intermediate compartment) and thereby secretion. Interacts with and inhibits by binding NCR3/NKp30.

It is found in the cytoplasm. It localises to the nucleus. The protein resides in the secreted. In terms of biological role, galactose-specific lectin which binds IgE. May mediate with the alpha-3, beta-1 integrin the stimulation by CSPG4 of endothelial cells migration. Together with DMBT1, required for terminal differentiation of columnar epithelial cells during early embryogenesis. In the nucleus: acts as a pre-mRNA splicing factor. Involved in acute inflammatory responses including neutrophil activation and adhesion, chemoattraction of monocytes macrophages, opsonization of apoptotic neutrophils, and activation of mast cells. Together with TRIM16, coordinates the recognition of membrane damage with mobilization of the core autophagy regulators ATG16L1 and BECN1 in response to damaged endomembranes. When secreted, interacts with NK cell-activating receptor NCR3/NKp30 acting as an inhibitory ligand which antagonizes NK cell attack. The sequence is that of Galectin-3 (LGALS3) from Oryctolagus cuniculus (Rabbit).